Here is a 123-residue protein sequence, read N- to C-terminus: Small ribosomal subunit protein uS13 (123 aa).

Residues 97–123 form a disordered region; it reads PVRGQRTHTNAKTRKGRSKLPVAAKKK.

It belongs to the universal ribosomal protein uS13 family. As to quaternary structure, part of the 30S ribosomal subunit. Forms a loose heterodimer with protein S19. Forms two bridges to the 50S subunit in the 70S ribosome.

In terms of biological role, located at the top of the head of the 30S subunit, it contacts several helices of the 16S rRNA. In the 70S ribosome it contacts the 23S rRNA (bridge B1a) and protein L5 of the 50S subunit (bridge B1b), connecting the 2 subunits; these bridges are implicated in subunit movement. Contacts the tRNAs in the A and P-sites. This is Small ribosomal subunit protein uS13 from Ehrlichia canis (strain Jake).